We begin with the raw amino-acid sequence, 635 residues long: Isethionate TRAP transporter permease protein DctMQ (635 aa).

16 helical membrane passes run 38–58 (KPFL…QTLY), 75–95 (TEEM…PVAI), 117–137 (ISWI…LWQS), 154–174 (LQLP…LMAV), 192–212 (TVIG…ADYI), 217–237 (VLFG…IGLG), 266–286 (FPIM…AGGL), 299–319 (GALP…FAAI), 350–370 (AIVA…PFVV), 379–399 (IGKL…ALMA), 431–451 (WALM…MTPT), 453–473 (AAAL…RELS), 481–501 (VVEA…ATIF), 526–546 (IAIL…MEAL), 572–592 (IIMV…VNLF), and 609–629 (VLPL…VPAI).

It in the N-terminal section; belongs to the TRAP transporter small permease family. The protein in the C-terminal section; belongs to the TRAP transporter large permease family. The complex comprises the periplasmic solute receptor protein DctP, and the fused transmembrane protein DctMQ.

It is found in the cell inner membrane. It participates in organosulfur degradation; alkanesulfonate degradation. Part of the tripartite ATP-independent periplasmic (TRAP) transport system DctPQM involved in the uptake of isethionate (2-hydroxyethanesulfonate), which is then catabolized by enzymes encoded by adjacent genes in the locus. Thereby is involved in an anaerobic respiration pathway that converts the sulfonate isethionate to ammonia, acetate and sulfide. The sequence is that of Isethionate TRAP transporter permease protein DctMQ from Oleidesulfovibrio alaskensis (strain ATCC BAA-1058 / DSM 17464 / G20) (Desulfovibrio alaskensis).